Reading from the N-terminus, the 159-residue chain is Cystatin-9 (159 aa).

The N-terminal stretch at 1 to 28 is a signal peptide; that stretch reads MSSPQRRKAMPWALSLLLMGFQLLVTYA.

It belongs to the cystatin family. Expressed in heart, placenta, lung, liver, skeletal muscle and pancreas. Not expressed in brain. Expressed in epididymis, kidney, testis, spinal cord, and thymus with a strong expression in epididymis and kidney and a weak expression in the spinal cord and thymus.

Its subcellular location is the secreted. May be involved in testis development. May play a role in hematopoietic differentiation or inflammation. Has immunomodulatory and antimicrobial functions against Francisella tularensis, a Gram-negative bacteria. The protein is Cystatin-9 (CST9) of Homo sapiens (Human).